Consider the following 610-residue polypeptide: UvrABC system protein C (610 aa).

In terms of domain architecture, GIY-YIG spans 16–94; the sequence is SQPGVYRMYD…IKLYQPRYNV (79 aa). The region spanning 204 to 239 is the UVR domain; that stretch reads DQVLTQLISRMETASQNLEFEEAARIRDQIQAVRRV.

Belongs to the UvrC family. Interacts with UvrB in an incision complex.

The protein localises to the cytoplasm. The UvrABC repair system catalyzes the recognition and processing of DNA lesions. UvrC both incises the 5' and 3' sides of the lesion. The N-terminal half is responsible for the 3' incision and the C-terminal half is responsible for the 5' incision. In Escherichia coli (strain UTI89 / UPEC), this protein is UvrABC system protein C.